The following is a 699-amino-acid chain: MNPSLCIAVAFACPLSALAASGAPGVGFNEKPSFLGEIVQRSVDGVSDDLLTAGLGRDGIQSATPPLVSASPTATELRRLAIYNNYRALVDTTSGGGFGSLFGPLIAVDAGGRVSAPGDGKIAGTEYLAYAIDRGDDSKVTLMVQVPAHFNPKAPCIVTGTSSGSRGIYGAIGTSGEWGLQKGCAVAYADKGTGNGMHDLDTNTVGLIDGTRADAVAAGVASHFTADLTEAERTQFLASWPHRVAVKHAHSRANPEAHWGQDTLDAVRFAFFVLNETYGRRTPRGIVRTILPPNTVVIASSVSNGGGAALAAAEQDDERLIDGVAVGEPQIQLRENDAVRVVRGSQVRTGTGRPLYDYTTFANLLQPCAVLSPRAAGSPGEAFIPAALAANRCEALAAHEFITGNTPAERGDSALDALVAYGWEPESTPLTASHYAFAVPPIALTYANAYGRFGVEERVCNYSFAATDAAGTPIAWPAASAATSFGTGNGIPPAAGLQIINDASLGGPRRDGASISPSTGKLDFNVDGALCLRQLWTGGGASAREVHESVDEVQVSAQLQGRPAIIVHGRADALVPVGFTSRPYLGLNSLAEHGRSRLRYVEVTNAQHFDAFIGTATLPGYDTRFVPLHVYFRQALDLMYSHLTARTPLPPSQLVRTTPRAGTPGAAVAITAANVPPIRMKPAAADLITVRRGEVVVPD.

A signal peptide spans 1–19; it reads MNPSLCIAVAFACPLSALA. S303 functions as the Charge relay system in the catalytic mechanism.

Belongs to the D-(-)-3-hydroxybutyrate oligomer hydrolase family.

It localises to the secreted. It carries out the reaction (3R)-hydroxybutanoate dimer + H2O = 2 (R)-3-hydroxybutanoate + H(+). It functions in the pathway lipid metabolism; butanoate metabolism. Participates in the degradation of poly-3-hydroxybutyrate (PHB). It works downstream of poly(3-hydroxybutyrate) depolymerase, hydrolyzing D(-)-3-hydroxybutyrate oligomers of various length (3HB-oligomers) into 3HB-monomers. The protein is D-(-)-3-hydroxybutyrate oligomer hydrolase of Azoarcus sp. (strain BH72).